The sequence spans 248 residues: MDPTRGLCALSTHDLAKFHSLPPARKAAGKRAHLRCYSKLLSLKSWEQLASFLSLPPGPTFTDFRLFFEVTLGRRIADCVVVALQPYPRCYIVEFKTAMSNTANPQSVTRKAQRLEGTAQLCDCANFLRTSCPPVLGSQGLEVLAALVFKNQRSLRTLQVEFPALGQKTLPTSTTGLLNLLSRWQDGALRARLDRPRPTAQGHRPRTHVGPKPSQLTARVPRSARAGRAGGRKGQVGAVGQVCPGAQK.

The disordered stretch occupies residues 194–248 (DRPRPTAQGHRPRTHVGPKPSQLTARVPRSARAGRAGGRKGQVGAVGQVCPGAQK). Low complexity predominate over residues 218–227 (ARVPRSARAG).

The protein belongs to the herpesviridae UL24 family.

Its subcellular location is the virion. The protein localises to the host cytoplasm. The protein resides in the host nucleus. It is found in the host nucleolus. It localises to the host Golgi apparatus. May participate in nuclear egress of viral particles. Plays a role in the dispersal of several host nucleolar proteins including NCL/nucleolin and NPM1. Since deletion of host NCL/nucleolin negatively impact on nuclear egress, UL24 supposedly acts on this process through its effect on host nucleoli. In Homo sapiens (Human), this protein is Protein UL24 homolog.